The chain runs to 161 residues: Nucleotide-binding protein Spea_3114 (161 aa).

The protein belongs to the YajQ family.

Functionally, nucleotide-binding protein. The sequence is that of Nucleotide-binding protein Spea_3114 from Shewanella pealeana (strain ATCC 700345 / ANG-SQ1).